A 258-amino-acid polypeptide reads, in one-letter code: Thiazole synthase (258 aa).

Lys-100 functions as the Schiff-base intermediate with DXP in the catalytic mechanism. 1-deoxy-D-xylulose 5-phosphate contacts are provided by residues Gly-161, Ala-187–Gly-188, and Asn-209–Thr-210.

It belongs to the ThiG family. Homotetramer. Forms heterodimers with either ThiH or ThiS.

Its subcellular location is the cytoplasm. It carries out the reaction [ThiS sulfur-carrier protein]-C-terminal-Gly-aminoethanethioate + 2-iminoacetate + 1-deoxy-D-xylulose 5-phosphate = [ThiS sulfur-carrier protein]-C-terminal Gly-Gly + 2-[(2R,5Z)-2-carboxy-4-methylthiazol-5(2H)-ylidene]ethyl phosphate + 2 H2O + H(+). It participates in cofactor biosynthesis; thiamine diphosphate biosynthesis. Functionally, catalyzes the rearrangement of 1-deoxy-D-xylulose 5-phosphate (DXP) to produce the thiazole phosphate moiety of thiamine. Sulfur is provided by the thiocarboxylate moiety of the carrier protein ThiS. In vitro, sulfur can be provided by H(2)S. The sequence is that of Thiazole synthase from Campylobacter jejuni (strain RM1221).